Here is a 363-residue protein sequence, read N- to C-terminus: MRLQEIQLVNFRKHKELVFAPSEAITVVYGPNGSGKTNILEAVHYCTLARGLNRSLDRECLNFDAGYFLLQGTFADDRGIELSVKVSYEKNVEKKIFINSDELKKYSQLIGRIPCVTFSPMELSLVNGSPQERRRFMDNALSQTNKSYLDDLLQYRRVLQQRNTLLGAVNEKGMDRDSLEVWTEKLTQLACSIVSERLAFIERLFVYIEPVYEQLGLGEVPGISYRSAAGRHANEIAPEELFSFMMQRFREIEHQEIFRKQSLAGPHRDDLVFRFNDTDVKKYASQGQLRTFLIAVKLALHTLVSDTTGERPLFLLDDLFSELDGTRIEKILEQLEGAGQSIITATDRKDGSGVRSVSIEDLL.

ATP is bound at residue 30-37 (GPNGSGKT).

It belongs to the RecF family.

The protein resides in the cytoplasm. Its function is as follows. The RecF protein is involved in DNA metabolism; it is required for DNA replication and normal SOS inducibility. RecF binds preferentially to single-stranded, linear DNA. It also seems to bind ATP. The chain is DNA replication and repair protein RecF from Chlorobium phaeobacteroides (strain BS1).